We begin with the raw amino-acid sequence, 594 residues long: Class I diterpene synthase TPS6, chloroplastic (594 aa).

The Mg(2+) site is built by Asp330, Asp334, Asn474, Gln477, and Glu482. Positions 330-334 match the DDXXD motif motif; it reads DDFFD.

Belongs to the terpene synthase family. Mg(2+) is required as a cofactor. As to expression, mostly expressed in trichomes of leaves and fruits.

It is found in the plastid. The protein localises to the chloroplast. It catalyses the reaction peregrinol diphosphate = labd-13(16),14-diene-9-ol + diphosphate. It carries out the reaction 9alpha-copalyl diphosphate = syn-isopimara-7,15-diene + diphosphate. It participates in secondary metabolite biosynthesis; terpenoid biosynthesis. In terms of biological role, involved in the biosynthesis of labdane-type diterpenoid including cleroda-dienols, and peregrinol lactones and furan derivatives, dopaminergic diterpenoids that can bind to dopamine receptors in the human pituitary gland, have probably ability to lower prolactin levels, and are used to treat menstrual cycle disorders (e.g. premenstrual syndrome and mastodynia). Terpene synthase the catalyzes the conversion of peregrinol diphosphate to labda-13(16),14-dien-9-ol, and of syn-copalyl diphosophate to dehydroabietadiene and syn-isopimara-7,15-diene. This Vitex agnus-castus (Chaste tree) protein is Class I diterpene synthase TPS6, chloroplastic.